We begin with the raw amino-acid sequence, 353 residues long: UPF0283 membrane protein YcjF (353 aa).

Positions 1–19 (MSEPLKPRIDFAEPLKEEP) are enriched in basic and acidic residues. Residues 1 to 48 (MSEPLKPRIDFAEPLKEEPTSAFKAQQTFSEAESHTFAPAAIDERPED) form a disordered region. At 1–69 (MSEPLKPRID…LRPKRSLWRK (69 aa)) the chain is on the periplasmic side. A helical membrane pass occupies residues 70–90 (MVMGGLALFGASVVGQGVQWT). Residues 91–99 (MNAWQTQDW) lie on the Cytoplasmic side of the membrane. Residues 100 to 120 (VALGGCAAGALIVGAGVGSVV) traverse the membrane as a helical segment. Residues 121–212 (TEWWRLWRLR…ARREISRFAA (92 aa)) are Periplasmic-facing. The helical transmembrane segment at 213-233 (ESTLMIAVSPLALVDMAFIAW) threads the bilayer. The Cytoplasmic portion of the chain corresponds to 234 to 353 (RNLRLINRIA…LQKSKSSPEK (120 aa)).

This sequence belongs to the UPF0283 family.

The protein resides in the cell inner membrane. The polypeptide is UPF0283 membrane protein YcjF (ycjF) (Salmonella typhi).